Here is a 79-residue protein sequence, read N- to C-terminus: Putative defensin-like protein 274 (79 aa).

Positions 1–23 (MASSRFQLVALLVVFSLVISITA) are cleaved as a signal peptide. 4 disulfides stabilise this stretch: Cys35–Cys76, Cys41–Cys64, Cys47–Cys74, and Cys51–Cys75.

The protein belongs to the DEFL family.

The protein localises to the secreted. In Arabidopsis thaliana (Mouse-ear cress), this protein is Putative defensin-like protein 274.